The following is a 344-amino-acid chain: Heat-inducible transcription repressor HrcA (344 aa).

The protein belongs to the HrcA family.

Its function is as follows. Negative regulator of class I heat shock genes (grpE-dnaK-dnaJ and groELS operons). Prevents heat-shock induction of these operons. In Geobacillus sp. (strain WCH70), this protein is Heat-inducible transcription repressor HrcA.